A 91-amino-acid polypeptide reads, in one-letter code: Small ribosomal subunit protein bS16 (91 aa).

The protein belongs to the bacterial ribosomal protein bS16 family. In terms of assembly, part of the 30S ribosomal subunit.

In terms of biological role, binds to the lower part of the body of the 30S subunit, where it stabilizes two of its domains. The sequence is that of Small ribosomal subunit protein bS16 from Thermus thermophilus.